A 299-amino-acid polypeptide reads, in one-letter code: Non-structural protein V (299 aa).

The interval S40 to G94 is disordered. An interaction with host STAT1 region spans residues Y110–V120. Positions S133–G143 are enriched in low complexity. Disordered regions lie at residues S133–R168 and P204–K229. Residues G144–T160 show a composition bias toward acidic residues. Zn(2+) contacts are provided by H232, C251, C255, C267, C269, C272, C276, and C279.

It belongs to the paramyxoviruses V protein family. As to quaternary structure, interacts with host IFIH1/MDA5 and DHX58/LGP2; these interactions are involved in the inhibition of the host type I interferon signaling pathway. Interacts with host TYK2; this interaction inhibits the type I interferon signaling pathway without affecting the type II pathway. Interacts with host IRF7; this interaction inhibits IRF7 translocation to the nucleus. Interacts with host CHUK. Interacts with host RELA/p65; this interaction inhibits the nuclear translocation of NF-KappaB. Interacts (via N-terminus) with host STAT1 and JAK1; these interactions inhibit STAT1 phosphorylation by Jak1 and thereby the type I interferon signaling pathway. Interacts (via C-terminus) with host STAT2; this interaction is involved in the inhibition of the host type I interferon signaling pathway. Forms a complex with host PPP1CA and PPP1CC; this interaction prevents dephosphorylation of host IFIH1/MDA5 and leads to the inhibition of the host type I interferon signaling pathway. Interacts with host IRF9; this interaction prevents the binding of IRF9 to STAT2 and thereby the type I interferon signaling pathway. Interacts with host RIGI regulatory protein (via CARDs domain) and host TRIM25 (via SPRY domain); these interactions prevent TRIM25-mediated ubiquitination of RIG-I and disrupts downstream RIG-I signaling.

Its subcellular location is the host cytoplasm. Functionally, plays an essential role in the inhibition of host immune response. Prevents the establishment of cellular antiviral state by blocking interferon-alpha/beta (IFN-alpha/beta) production and signaling pathway. Interacts with host IFIH1/MDA5 and DHX58/LGP2 to inhibit the transduction pathway involved in the activation of IFN-beta promoter, thus protecting the virus against cell antiviral state. Blocks the type I interferon signaling pathway by interacting with host TYK2 and thereby inhibiting downstream STAT1 and STAT2 phosphorylation. Blocks the type I interferon signaling pathway by disrupting the RIG-I signaling pathway. Moderately affects the type II interferon signaling. Prevents PP1alpha/gamma-mediated dephosphorylation of host IFIH1/MDA5 and thus blocks its activation. In Homo sapiens (Human), this protein is Non-structural protein V (P/V).